The chain runs to 2353 residues: MKQRKGQGSGGSRGRKKRGLSDISPSTSLPPLVEGQLRCFLKLTVNRVIWKIAKPPTCVLVRVRWWGETSDGTLFCPRDALQTEPKAVRTTTRYAIRCGPKQFTSYLTDMAVLVLEVITKLDGLPIGRVQINGLAQLSPTHQINGFFTIVSSTSKKLGELQVSLALEPLSETYDSYHPLPTTDMTENVLLSKQGFRENTEPSSTQFQVPSRPRDIHTIKIDGKELAANSSRSTTPRGKDHVCFAENPDTIKDSSFGLQHSLNSGQSLESVTLKGRAPRKQMSLLNSSEFQPQIRTVAKSHSDSCILSSNNLPTKDLLSALLEQGNKLRNAMVISAMKSSPETSMLLDQVHPPINEDSLRASTQIRAFSRNRFKDHIEDHLLPSTENTFWRHDTKADTRAIQLLLGSAELSQGNFWDGLGSPPDSPSPGSDVYCISELNDPQYDQSLLENLFYTAPKSDTSISDFLSEEDDIVPSKKISQSTALARSSKVLESSDHKLKKRSAGKRNRNLVEQQMLSETPEDAQTMTLSVDRLALLGRTHSVRIIIETMGVPPDSPQMTPGKKSYAGPPPKVTTAKKRTFFVEYHFPVGFSESGLGKTALITEVVRLASSKITDGKVKFQQRFVFPVQFGGPMIEHWWNSNLTFQIYVKKTPQKKPEVIGSVSLSLRAVIQSELLSFSDQLPVQQENGQSPFGPLKVTMELITDNKDFTGINTKLSGNTHYTPLCAPTSPNKALPELNQDMTCTKNPQNLNQIHEETAKKAQNLVLPNRKSPSPVAPHPSTFVATPASHNLVNQTNGTTKESALLLHVLLMVPDGKDFISGESEKQSPCNVYLNCKLFSTEEVTRSVIAWGTTQPVFNFSQVIPVSLSSKYLERLKNNVMVIETWNKVRSPGQDKLLGLVKLPLHQFYMSFKDAKISRLLLDAQYPVVAVDSYMPVIDVFSGHQNGSLRVFLAMGSSNQIMALQRLKNEEGTLPPFSPRPAHFLDQPTAASVAMAEDRGNGLMEHCFEIHIEMVKGLAPLQATVWGEADCYVQYYFPVQHSQSSVLKGPEFLENGITLKPFRTATTLCVPDPIFNSEHHHSLLLPAEVPVQRLLLSAFSAQGLVPGGGVQFEIWCRYYYPNVRDQKVAKGTLPLSRICAMVTTQHREDVGIQTFNLPLTPRIENRKELRNQSSGLLDVGLRYRRSPRTAEGVLAARTVSISVQIIRACGLQAAAKALAEREPALQFSATVGVNASVTTHLSFLPQGEQRRTHPVACSFCPEFSHHVEFTCNLVTQHCSGEACFLAELLEFAEVIFAVYHENTKSASDIISIESCKEYLLGVVKVPTKELLIKRSGITGWYPIILPEDGGLPHGLELMQKIVGGLELSISFTHRGDRERVLEAAEHLGWSFENSLKDFVRMDEGEPATVTISTPRLWLPIHCVLLAGHNHIHKNTYCYLRYKFYDHEAFWTPLKKPKESVNKKQIMVTFKASKRAEVTRGPSLLWYFREERLEIQVWRAYGNDSVERPHQTDSWIGSAYVDLARLGERSARTLTVSGVYPLFGRNASNLSGAALRVHVVLSSLSSHLEPTHELDSMDCSSHSESEQLPRRNDEVQLSPPEVISCHQKSPASTQVPCSSTTAEVRLTQEGPADLDGTFAVSILVERAMHLSLKGSPLTERKVSIPSCCVSFATADESSPVYTQVVENTDSPIWNFQQQSRLSKELLLDPQQTLVFKVWHKGDEERVIGFASVDLSPLLSGFQFVCGWYNITDFSGECQGQIKVAVSPLESLIHFKEERQARRGVETSKSLIPIYSPFSFPASDTYAAFSSHMARQTLDQLAHASSKELDFSSPGRSDTTRSQASRHEEHVQNIRRFHESLHLQGEAPLPCDDKLTTSPLSSQTSILTSLRKNLSELDQIQRYFRQKLTKPFLPLSPQTQTAISQHQESCRDHLGPGASSLDPGSQCILEKSSNLVLQVSSLITDLQTITRDSQAALSSHRARSRSNKATTLPDAQDTEALQERCTMPDEPLVRAPDKGTDSPSPPPLEETSNGGRMLHESLRHAVPITRMQSSEDTEAGPAYSDEDYEEDIIEPRTLNEITTVTDKTSPWSSVISDTSEVISPQPDEVQREGPSCPSPGPFCREELMVKSSFLSSPERAVNPHLPRQGSPSQSLVACECEASKARVGGESASANPQPIPCPTLSGAQQSSTFVGWSSPQTDQNKEPKSEAPAENEAATSELGDSADSFKKLPLNLASQSRRENHKGPPIDSSDIRQRQVTTGSETSTKQSLLLPGPIVVPNFFLPPQQLEASLRMLSLSATLPPAATTDQDKSEATRGALSQRPCRPRPNSLPLNLPEEETLRIARIFSSQYSQKD.

A disordered region spans residues 1–27 (MKQRKGQGSGGSRGRKKRGLSDISPST). Residue Ser-466 is modified to Phosphoserine. Disordered regions lie at residues 488-508 (KVLE…RNRN) and 549-568 (GVPP…AGPP). The span at 496–507 (KLKKRSAGKRNR) shows a compositional bias: basic residues. One can recognise a C2 1 domain in the interval 521 to 678 (DAQTMTLSVD…IQSELLSFSD (158 aa)). Phosphoserine is present on Ser-728. C2 domains follow at residues 787–919 (SHNL…SRLL), 985–1147 (QPTA…HRED), 1171–1339 (SSGL…TGWY), and 1403–1533 (EPAT…TLTV). The disordered stretch occupies residues 1569-1591 (HELDSMDCSSHSESEQLPRRNDE). In terms of domain architecture, C2 6 spans 1617 to 1745 (TTAEVRLTQE…SGFQFVCGWY (129 aa)). The interval 1822–1846 (SKELDFSSPGRSDTTRSQASRHEEH) is disordered. Residues 1830–1839 (PGRSDTTRSQ) show a composition bias toward polar residues. Ser-1891 bears the Phosphoserine mark. Disordered stretches follow at residues 1972 to 2032 (ALSS…NGGR), 2084 to 2118 (TSPW…PGPF), 2130 to 2269 (LSSP…QSLL), and 2301 to 2334 (PAAT…LNLP). The span at 2007-2016 (PLVRAPDKGT) shows a compositional bias: basic and acidic residues. A compositionally biased stretch (polar residues) spans 2084–2098 (TSPWSSVISDTSEVI). Phosphoserine is present on residues Ser-2114 and Ser-2132. Over residues 2181–2198 (SGAQQSSTFVGWSSPQTD) the composition is skewed to polar residues. A compositionally biased stretch (basic and acidic residues) spans 2236 to 2253 (SRRENHKGPPIDSSDIRQ). Residues 2254–2267 (RQVTTGSETSTKQS) show a composition bias toward polar residues.

In terms of assembly, interacts with IFT88, BBS4 and PCM1. Interacts with OFD1; OFD1 may act as a negative regulator of C2CD3. Associates with the BBSome complex.

The protein localises to the cytoplasm. It is found in the cytoskeleton. Its subcellular location is the cilium basal body. The protein resides in the microtubule organizing center. It localises to the centrosome. The protein localises to the centriole. In terms of biological role, component of the centrioles that acts as a positive regulator of centriole elongation. Promotes assembly of centriolar distal appendage, a structure at the distal end of the mother centriole that acts as an anchor of the cilium, and is required for recruitment of centriolar distal appendages proteins CEP83, SCLT1, CEP89, FBF1 and CEP164. Not required for centriolar satellite integrity or RAB8 activation. Required for primary cilium formation. Required for sonic hedgehog/SHH signaling and for proteolytic processing of GLI3. This is C2 domain-containing protein 3 (C2CD3) from Homo sapiens (Human).